The chain runs to 392 residues: L-rhamnonate dehydratase (392 aa).

The substrate site is built by histidine 22 and arginine 48. The Mg(2+) site is built by aspartate 214, glutamate 240, and glutamate 268. The active-site Proton acceptor is the histidine 318. Glutamate 338 lines the substrate pocket.

The protein belongs to the mandelate racemase/muconate lactonizing enzyme family. RhamD subfamily. As to quaternary structure, homooctamer; tetramer of dimers. It depends on Mg(2+) as a cofactor.

The enzyme catalyses L-rhamnonate = 2-dehydro-3-deoxy-L-rhamnonate + H2O. Its function is as follows. Catalyzes the dehydration of L-rhamnonate to 2-keto-3-deoxy-L-rhamnonate (KDR). This chain is L-rhamnonate dehydratase, found in Paraburkholderia phymatum (strain DSM 17167 / CIP 108236 / LMG 21445 / STM815) (Burkholderia phymatum).